The primary structure comprises 243 residues: MAVKQRIDQQSAWVLHTLPWRETSLIVEVFSRDHGRLALVAKGARRPHSAFRGVLMAFQPLLMDWSGGGEVRTLVRAEWQGGQPLLTGQALLCGYYLNELLVKLTPRDDPHPNLFVAYADAVRELGLGRPPPPVLRQFELALLQELGYGIELVHDVQSGEAVRGDATYAYIIEGGPAALDAPGDAPPDLPVVSGQTLLDMAAGDFSRSETLAQSKRLLRVLINHYLGGQPLQSRRVLQELLEL.

Belongs to the RecO family.

Its function is as follows. Involved in DNA repair and RecF pathway recombination. This is DNA repair protein RecO from Azoarcus sp. (strain BH72).